Reading from the N-terminus, the 405-residue chain is Tryptophan synthase beta chain (405 aa).

An N6-(pyridoxal phosphate)lysine modification is found at Lys-98.

It belongs to the TrpB family. Tetramer of two alpha and two beta chains. The cofactor is pyridoxal 5'-phosphate.

The catalysed reaction is (1S,2R)-1-C-(indol-3-yl)glycerol 3-phosphate + L-serine = D-glyceraldehyde 3-phosphate + L-tryptophan + H2O. The protein operates within amino-acid biosynthesis; L-tryptophan biosynthesis; L-tryptophan from chorismate: step 5/5. Functionally, the beta subunit is responsible for the synthesis of L-tryptophan from indole and L-serine. The sequence is that of Tryptophan synthase beta chain from Afipia carboxidovorans (strain ATCC 49405 / DSM 1227 / KCTC 32145 / OM5) (Oligotropha carboxidovorans).